A 227-amino-acid polypeptide reads, in one-letter code: NADH-quinone oxidoreductase subunit C (227 aa).

Belongs to the complex I 30 kDa subunit family. In terms of assembly, NDH-1 is composed of 14 different subunits. Subunits NuoB, C, D, E, F, and G constitute the peripheral sector of the complex.

It localises to the cell inner membrane. It carries out the reaction a quinone + NADH + 5 H(+)(in) = a quinol + NAD(+) + 4 H(+)(out). In terms of biological role, NDH-1 shuttles electrons from NADH, via FMN and iron-sulfur (Fe-S) centers, to quinones in the respiratory chain. The immediate electron acceptor for the enzyme in this species is believed to be ubiquinone. Couples the redox reaction to proton translocation (for every two electrons transferred, four hydrogen ions are translocated across the cytoplasmic membrane), and thus conserves the redox energy in a proton gradient. The protein is NADH-quinone oxidoreductase subunit C of Legionella pneumophila subsp. pneumophila (strain Philadelphia 1 / ATCC 33152 / DSM 7513).